Consider the following 218-residue polypeptide: dTTP/UTP pyrophosphatase (218 aa).

Catalysis depends on aspartate 69, which acts as the Proton acceptor.

Belongs to the Maf family. YhdE subfamily. It depends on a divalent metal cation as a cofactor.

It localises to the cytoplasm. The enzyme catalyses dTTP + H2O = dTMP + diphosphate + H(+). The catalysed reaction is UTP + H2O = UMP + diphosphate + H(+). In terms of biological role, nucleoside triphosphate pyrophosphatase that hydrolyzes dTTP and UTP. May have a dual role in cell division arrest and in preventing the incorporation of modified nucleotides into cellular nucleic acids. The chain is dTTP/UTP pyrophosphatase from Thermomicrobium roseum (strain ATCC 27502 / DSM 5159 / P-2).